Reading from the N-terminus, the 372-residue chain is MAAPQHTLADFVTDQWQRRSWFTWLMWPLSLLFGLIARIRRYGYQQGWFKSTRLPMPVIVVGNVTVGGTGKTPAVIALAHALAEAGLRPGVVSRGYGVKLNHPRRVKPTSKAADVGDEPLLIARAADVPVWVFPDRALCTQAMLVSHPGVNVLLLDDGLQHYKLQRDFEIVMFDTRMGGNGMMLPAGPLREPLTRPRDATLINDPNFRATPDKPDVYGMRLELDEAWQLNDPTMSCDVSKFADKRVLAAAGIGHPERFFASLRQAGLSPATLPLPDHYDFVQDPFADNPAALEADVILITEKDAVKCERFDDPRIWVVPTTPVIDAGLIDKIRRVVQARNPAIATPVTVGQSTATGMADGLDKEHQDGQPAA.

Position 65-72 (65-72 (TVGGTGKT)) interacts with ATP. A disordered region spans residues 351–372 (QSTATGMADGLDKEHQDGQPAA). Positions 360-372 (GLDKEHQDGQPAA) are enriched in basic and acidic residues.

This sequence belongs to the LpxK family.

The enzyme catalyses a lipid A disaccharide + ATP = a lipid IVA + ADP + H(+). Its pathway is glycolipid biosynthesis; lipid IV(A) biosynthesis; lipid IV(A) from (3R)-3-hydroxytetradecanoyl-[acyl-carrier-protein] and UDP-N-acetyl-alpha-D-glucosamine: step 6/6. Its function is as follows. Transfers the gamma-phosphate of ATP to the 4'-position of a tetraacyldisaccharide 1-phosphate intermediate (termed DS-1-P) to form tetraacyldisaccharide 1,4'-bis-phosphate (lipid IVA). This is Tetraacyldisaccharide 4'-kinase from Cupriavidus metallidurans (strain ATCC 43123 / DSM 2839 / NBRC 102507 / CH34) (Ralstonia metallidurans).